Reading from the N-terminus, the 370-residue chain is 5-hydroxytryptamine receptor 5B (370 aa).

Positions 1-36 (MEVSNLSGATPGLAFPPGPESCSDSPSSGRSMGSTP) are disordered. Residues 1–48 (MEVSNLSGATPGLAFPPGPESCSDSPSSGRSMGSTPGGLILPGREPPF) are Extracellular-facing. N5 carries an N-linked (GlcNAc...) asparagine glycan. Low complexity predominate over residues 20 to 36 (ESCSDSPSSGRSMGSTP). Residues 49–75 (SAFTVLVVTLLVLLIAATFLWNLLVLV) form a helical membrane-spanning segment. Over 76–88 (TILRVRAFHRVPH) the chain is Cytoplasmic. A helical membrane pass occupies residues 89-115 (NLVASTAVSDVLVAVLVMPLSLVSELS). Over 116–127 (AGRRWQLGRSLC) the chain is Extracellular. A disulfide bridge connects residues C127 and C205. Residues 128 to 150 (HVWISFDVLCCTASIWNVAAIAL) traverse the membrane as a helical segment. D134 is a binding site for serotonin. Over 151-168 (DRYWTITRHLQYTLRTRS) the chain is Cytoplasmic. The chain crosses the membrane as a helical span at residues 169–189 (RASALMIAITWALSALIALAP). The Extracellular segment spans residues 190–211 (LLFGWGEAYDARLQRCQVSQEP). The helical transmembrane segment at 212–233 (SYAVFSTCGAFYLPLAVVLFVY) threads the bilayer. The Cytoplasmic portion of the chain corresponds to 234–300 (WKIYKAAKFR…QKEKRAAMMV (67 aa)). Residues 301-325 (GILIGVFVLCWIPFFLTELISPLCA) traverse the membrane as a helical segment. Topologically, residues 326–327 (CS) are extracellular. The chain crosses the membrane as a helical span at residues 328–352 (LPPIWKSIFLWLGYSNSFFNPLIYT). At 353–370 (AFNKNYNNAFKSLFTKQR) the chain is on the cytoplasmic side.

Belongs to the G-protein coupled receptor 1 family. As to expression, expressed predominantly in the central nervous system; in the hippocampus, habenula, and the doral raphe.

It localises to the cell membrane. Its function is as follows. G-protein coupled receptor for 5-hydroxytryptamine (serotonin), a biogenic hormone that functions as a neurotransmitter, a hormone and a mitogen. Also functions as a receptor for ergot alkaloid derivatives and other psychoactive substances. Ligand binding causes a conformation change that triggers signaling via guanine nucleotide-binding proteins (G proteins) and modulates the activity of downstream effectors. Htr5b is coupled to G(i)/G(o) G alpha proteins and mediates inhibitory neurotransmission: signaling inhibits adenylate cyclase activity and activates a phosphatidylinositol-calcium second messenger system that regulates the release of Ca(2+) ions from intracellular stores. This is 5-hydroxytryptamine receptor 5B from Mus musculus (Mouse).